We begin with the raw amino-acid sequence, 208 residues long: Small ribosomal subunit protein uS4 (208 aa).

In terms of domain architecture, S4 RNA-binding spans 98-159 (RRLDNVVYRL…KSRNVAAISE (62 aa)).

This sequence belongs to the universal ribosomal protein uS4 family. As to quaternary structure, part of the 30S ribosomal subunit. Contacts protein S5. The interaction surface between S4 and S5 is involved in control of translational fidelity.

In terms of biological role, one of the primary rRNA binding proteins, it binds directly to 16S rRNA where it nucleates assembly of the body of the 30S subunit. Functionally, with S5 and S12 plays an important role in translational accuracy. The sequence is that of Small ribosomal subunit protein uS4 from Trichlorobacter lovleyi (strain ATCC BAA-1151 / DSM 17278 / SZ) (Geobacter lovleyi).